Consider the following 148-residue polypeptide: Fibroblast growth factor 1 (148 aa).

The propeptide occupies 1 to 11 (EITTFAALTER). Residue Asn-29 participates in heparin binding. The heparin-binding stretch occupies residues 123-139 (KKNGKTKLGSRTHFGQK).

It belongs to the heparin-binding growth factors family.

It localises to the secreted. The protein resides in the cytoplasm. Its subcellular location is the cell cortex. The protein localises to the cytosol. It is found in the nucleus. Functionally, plays an important role in the regulation of cell survival, cell division, angiogenesis, cell differentiation and cell migration. Functions as a potent mitogen in vitro. Acts as a ligand for FGFR1 and integrins. Binds to FGFR1 in the presence of heparin leading to FGFR1 dimerization and activation via sequential autophosphorylation on tyrosine residues which act as docking sites for interacting proteins, leading to the activation of several signaling cascades. Binds to integrins. Its binding to integrins and subsequent ternary complex formation with integrins and FGFR1 are essential for FGF1 signaling. The sequence is that of Fibroblast growth factor 1 (fgf1) from Cynops pyrrhogaster (Japanese fire-bellied newt).